The primary structure comprises 122 residues: MARIVGVEIPNDKKVEIALTYIYGIGKTRAKQICEATNIDPNKRVRELGDEEISKIATFIQQNYKVEGELRTEVMQNIKRLIDIGCYRGLRHKLGLPVRGQKTKSNARTRKGPRPSRIKKKK.

The tract at residues proline 97 to lysine 122 is disordered. Positions glutamine 101–lysine 122 are enriched in basic residues.

This sequence belongs to the universal ribosomal protein uS13 family. Part of the 30S ribosomal subunit. Forms a loose heterodimer with protein S19. Forms two bridges to the 50S subunit in the 70S ribosome.

In terms of biological role, located at the top of the head of the 30S subunit, it contacts several helices of the 16S rRNA. In the 70S ribosome it contacts the 23S rRNA (bridge B1a) and protein L5 of the 50S subunit (bridge B1b), connecting the 2 subunits; these bridges are implicated in subunit movement. Contacts the tRNAs in the A and P-sites. In Thermosipho melanesiensis (strain DSM 12029 / CIP 104789 / BI429), this protein is Small ribosomal subunit protein uS13.